Reading from the N-terminus, the 1098-residue chain is Sister-chromatid cohesion protein 3 (1098 aa).

The tract at residues 1–68 is disordered; that stretch reads MEDSPQGLKR…RSRTHPPQQN (68 aa). The stretch at 245–265 forms a coiled coil; that stretch reads RVDSLNKRLSVTHEQITTLED. The SCD domain occupies 275 to 360; the sequence is FVHRYRDIDN…QRFSNRMIEM (86 aa). 3 coiled-coil regions span residues 632-653, 888-908, and 1009-1032; these read KLKD…EVKD, LESL…GREE, and LETL…ANVR. The disordered stretch occupies residues 1027–1077; it reads EAANVRRRGRPRKRPETERKRLFDEQSGSDEDESISGGSDREDKLDEDAPL. Residues 1040 to 1050 show a composition bias toward basic and acidic residues; it reads RPETERKRLFD.

The protein belongs to the SCC3 family. Part of the cohesin complex. Interacts with DEK3. In terms of tissue distribution, expressed in roots, mature leaves, buds and seedlings.

It localises to the nucleus. The protein resides in the chromosome. Its function is as follows. Essential component of cohesin complex, a complex required for the cohesion of sister chromatids after DNA replication. The cohesin complex apparently forms a large proteinaceous ring within which sister chromatids can be trapped. At anaphase, the complex is cleaved and dissociates from chromatin, allowing sister chromatids to segregate. The cohesin complex may also play a role in spindle pole assembly during mitosis. Required for centromere cohesion maintenance at anaphase I and for the monopolar orientation of the kinetochores during both male and female meiosis. Also involved in mitosis. This is Sister-chromatid cohesion protein 3 from Arabidopsis thaliana (Mouse-ear cress).